The sequence spans 143 residues: Transcriptional regulator MraZ (143 aa).

SpoVT-AbrB domains are found at residues 5–47 (EYKH…PMHE) and 76–119 (ATEC…SSKR).

The protein belongs to the MraZ family. Forms oligomers.

The protein resides in the cytoplasm. It localises to the nucleoid. The protein is Transcriptional regulator MraZ of Halothermothrix orenii (strain H 168 / OCM 544 / DSM 9562).